Here is a 172-residue protein sequence, read N- to C-terminus: Large ribosomal subunit protein uL10 (172 aa).

The protein belongs to the universal ribosomal protein uL10 family. Part of the ribosomal stalk of the 50S ribosomal subunit. The N-terminus interacts with L11 and the large rRNA to form the base of the stalk. The C-terminus forms an elongated spine to which L12 dimers bind in a sequential fashion forming a multimeric L10(L12)X complex.

Forms part of the ribosomal stalk, playing a central role in the interaction of the ribosome with GTP-bound translation factors. The protein is Large ribosomal subunit protein uL10 of Francisella tularensis subsp. tularensis (strain FSC 198).